We begin with the raw amino-acid sequence, 134 residues long: Small ribosomal subunit protein uS8c (134 aa).

Belongs to the universal ribosomal protein uS8 family. As to quaternary structure, part of the 30S ribosomal subunit.

It is found in the plastid. The protein resides in the chloroplast. Its function is as follows. One of the primary rRNA binding proteins, it binds directly to 16S rRNA central domain where it helps coordinate assembly of the platform of the 30S subunit. The polypeptide is Small ribosomal subunit protein uS8c (rps8) (Bigelowiella natans (Pedinomonas minutissima)).